A 501-amino-acid polypeptide reads, in one-letter code: HMG-box protein STE11 (501 aa).

Polar residues predominate over residues 142–153 (PVNMVGSLSGSP). Disordered stretches follow at residues 142 to 205 (PVNM…KRPL) and 246 to 293 (YAEM…SLEQ). Low complexity predominate over residues 192–204 (SRSGSSSSGIKRP). A DNA-binding region (HMG box) is located at residues 201–265 (IKRPLNSFML…RHAKEYPDYK (65 aa)). Over residues 246 to 263 (YAEMAQRERERHAKEYPD) the composition is skewed to basic and acidic residues.

Phosphorylated by MAPK2.

The protein resides in the nucleus. This is HMG-box protein STE11 from Pneumocystis carinii.